A 206-amino-acid chain; its full sequence is Ribosomal RNA small subunit methyltransferase G (206 aa).

Residues Gly-73, Leu-78, 124-125 (VE), and Arg-139 each bind S-adenosyl-L-methionine.

It belongs to the methyltransferase superfamily. RNA methyltransferase RsmG family.

The protein resides in the cytoplasm. The enzyme catalyses guanosine(527) in 16S rRNA + S-adenosyl-L-methionine = N(7)-methylguanosine(527) in 16S rRNA + S-adenosyl-L-homocysteine. Its function is as follows. Specifically methylates the N7 position of guanine in position 527 of 16S rRNA. The chain is Ribosomal RNA small subunit methyltransferase G from Sodalis glossinidius (strain morsitans).